The following is a 318-amino-acid chain: Basic leucine zipper (bZIP) transcription factor atfB (318 aa).

The disordered stretch occupies residues 114–157 (FNSSPPEYAPPKHRSSLSEQSQTDGYGVSTRRRKASAIDQCEQQ). Residues 160–199 (REKREKFLERNRLAASKCRQKKKEHTKLLETRFREVSNKK) form a basic motif region. The bZIP domain maps to 160 to 223 (REKREKFLER…LNLKNEMLRH (64 aa)). The leucine-zipper stretch occupies residues 202 to 216 (LESEIEHLRSEVLNL). The disordered stretch occupies residues 275-301 (DGPMQLPSEMGSPLDQRRDSEQSIMTE).

Belongs to the bZIP family. ATF subfamily.

It localises to the nucleus. In terms of biological role, transcription factor that acts as a key player in the regulatory circuit that integrates secondary metabolism and cellular response to oxidative stress. Regulates the genes involved in development and stress response through direct binding to their promoters. The chain is Basic leucine zipper (bZIP) transcription factor atfB from Aspergillus flavus (strain ATCC 200026 / FGSC A1120 / IAM 13836 / NRRL 3357 / JCM 12722 / SRRC 167).